We begin with the raw amino-acid sequence, 303 residues long: Protoheme IX farnesyltransferase (303 aa).

The next 9 helical transmembrane spans lie at 25-45, 54-74, 104-124, 125-145, 151-171, 179-199, 227-247, 248-268, and 280-300; these read MGLVQGNLIPAFAGAWLAVVM, IPQILLMLLGSTLIMGGACAL, LLLLSFGMMLVGEICLFLLNI, PSGVLGLMGIVGYVSYYSIWS, WNTVIGSFPGAVPPLIGWVAI, AIALFLVVFCWQPIHFYALAI, FIWLIILLPVPLLLINLGVVF, VVLATLLNLGWIALGLTTFKK, and FIYSLNYLVIFFVLAVIVSLL.

The protein belongs to the UbiA prenyltransferase family. Protoheme IX farnesyltransferase subfamily. As to quaternary structure, interacts with CtaA.

It is found in the cell membrane. It catalyses the reaction heme b + (2E,6E)-farnesyl diphosphate + H2O = Fe(II)-heme o + diphosphate. It participates in porphyrin-containing compound metabolism; heme O biosynthesis; heme O from protoheme: step 1/1. Converts heme B (protoheme IX) to heme O by substitution of the vinyl group on carbon 2 of heme B porphyrin ring with a hydroxyethyl farnesyl side group. This is Protoheme IX farnesyltransferase from Staphylococcus aureus (strain bovine RF122 / ET3-1).